A 277-amino-acid polypeptide reads, in one-letter code: Putative phosphoenolpyruvate synthase regulatory protein (277 aa).

Position 157-164 (157-164) interacts with ADP; sequence GVSRCGKT.

The protein belongs to the pyruvate, phosphate/water dikinase regulatory protein family. PSRP subfamily.

The enzyme catalyses [pyruvate, water dikinase] + ADP = [pyruvate, water dikinase]-phosphate + AMP + H(+). The catalysed reaction is [pyruvate, water dikinase]-phosphate + phosphate + H(+) = [pyruvate, water dikinase] + diphosphate. In terms of biological role, bifunctional serine/threonine kinase and phosphorylase involved in the regulation of the phosphoenolpyruvate synthase (PEPS) by catalyzing its phosphorylation/dephosphorylation. The sequence is that of Putative phosphoenolpyruvate synthase regulatory protein from Photobacterium profundum (strain SS9).